The following is a 339-amino-acid chain: Ubiquitin carboxyl-terminal hydrolase 50 (339 aa).

The region spanning 44–339 (TGLWNLGNTC…AFCKNSVTQA (296 aa)) is the USP domain. C53 serves as the catalytic Nucleophile. H327 acts as the Proton acceptor in catalysis.

This sequence belongs to the peptidase C19 family. Weakly expressed in a few tissues.

It is found in the cytoplasm. The protein localises to the cytoskeleton. Its subcellular location is the microtubule organizing center. It localises to the centrosome. The protein resides in the nucleus. It carries out the reaction Thiol-dependent hydrolysis of ester, thioester, amide, peptide and isopeptide bonds formed by the C-terminal Gly of ubiquitin (a 76-residue protein attached to proteins as an intracellular targeting signal).. In terms of biological role, deubiquitinating enzyme that removes conjugated ubiquitin from specific proteins to regulate different cellular processes. Regulates the inflammasome signaling pathway by deubiquitinating 'Lys-63'-linked polyubiquitination of the PYCARD/ASC adapter protein. Regulates the ubiquitination and stability of the ACE2 protein. Acts as a negative regulator of the G2/M checkpoint pathway, by preventing serine/threonine kinase WEE1 degradation, thereby repressing entry into mitosis following activation of the G2/M DNA damage checkpoint. This is Ubiquitin carboxyl-terminal hydrolase 50 from Homo sapiens (Human).